The chain runs to 143 residues: Small ribosomal subunit protein bS6 (143 aa).

The disordered stretch occupies residues 95 to 143 (GPDTEQSFIMKSKDDKGDKPERRRRDDDENGDVGVSNDSDNDGGNAEAA). The span at 105-121 (KSKDDKGDKPERRRRDD) shows a compositional bias: basic and acidic residues.

It belongs to the bacterial ribosomal protein bS6 family.

Functionally, binds together with bS18 to 16S ribosomal RNA. The chain is Small ribosomal subunit protein bS6 from Xylella fastidiosa (strain M23).